Reading from the N-terminus, the 421-residue chain is Prenyltransferase asqH2 (421 aa).

The segment at 1–28 (MDRNSFTAYGPATGAITESGEQENDHTK) is disordered. An L-tryptophan-binding site is contributed by E105. Substrate is bound by residues R119, R272, K274, Y276, and Y341.

The protein belongs to the tryptophan dimethylallyltransferase family.

It carries out the reaction yaequinolone E + dimethylallyl diphosphate + H2O = [(1'E)-3'-hydroxy-3',7'-dimethylocta-1',6'-dien-1'-yl]-quinolinone B + diphosphate. It functions in the pathway secondary metabolite biosynthesis. Its pathway is alkaloid biosynthesis. It participates in mycotoxin biosynthesis. In terms of biological role, prenyltransferase; part of the gene cluster that mediates the biosynthesis of the aspoquinolone mycotoxins. Within the pathway, the prenyltransferase asqH2 performs the second alkylation with DMAPP at delta(3') double bond to yield a carbenium ion intermediate, which can be attacked by H(2)O to yield a styrenyl quinolone containing a C3'-hydroxyprenyl chain. The first step of the pathway is catalyzed by the nonribosomal peptide synthetase asqK that condenses anthranilic acid and O-methyl-L-tyrosine to produce 4'-methoxycyclopeptin. 4'-methoxycyclopeptin is then converted to 4'-methoxydehydrocyclopeptin by the ketoglutarate-dependent dioxygenase asqJ. AsqJ also converts its first product 4'-methoxydehydrocyclopeptin to 4'-methoxycyclopenin. The following conversion of 4'-methoxycyclopenin into 4'-methoxyviridicatin is catalyzed by the cyclopenase asqI. 4'-methoxyviridicatin is the precursor of quinolone natural products, and is further converted to quinolinone B. The prenyltransferase asqH1 then catalyzes the canonical Friedel-Crafts alkylation of quinolinone B with dimethylallyl cation to yield dimethylallyl quinolone, which is subjected to FAD-dependent dehydrogenation by the FAD-linked oxidoreductase asqF to yield conjugated aryl diene. The delta(3') double bond then serves as the site of the second alkylation with DMAPP catalyzed by the prenyltransferase asqH2 to yield a carbenium ion intermediate, which can be attacked by H(2)O to yield a styrenyl quinolone containing a C3'-hydroxyprenyl chain. The FAD-dependent monooxygenase asqG performs epoxidation of the terminal C7'-C8' olefin. Finally, after dehydratation of the epoxide at C3 by asqC, the quinolone epoxide rearrangement protein asqO catalyzes an enzymatic 3-exo-tet cyclization to yield the cyclopropyl-THF ring system in aspoquinolone. This Emericella nidulans (strain FGSC A4 / ATCC 38163 / CBS 112.46 / NRRL 194 / M139) (Aspergillus nidulans) protein is Prenyltransferase asqH2.